The sequence spans 395 residues: Capsid protein (395 aa).

Over residues 1-41 (MARKYAKRSKSRPRTARRSPKSRSRPRSRAPRRKAPSRPRI) the composition is skewed to basic residues. Residues 1-51 (MARKYAKRSKSRPRTARRSPKSRSRPRSRAPRRKAPSRPRIQRVNPVRRPM) are disordered. Positions 2-9 (ARKYAKRS) match the Nuclear localization signal motif.

Its subcellular location is the host nucleus. The protein resides in the virion. Its function is as follows. Self-assembles to form the virion icosahedral capsid. The polypeptide is Capsid protein (Chaetoceros setoense (Chaetoceros setoense DNA virus)).